The chain runs to 239 residues: Endonuclease V (239 aa).

Asp48 and Asp116 together coordinate Mg(2+).

Belongs to the endonuclease V family. Mg(2+) is required as a cofactor.

The protein localises to the cytoplasm. It catalyses the reaction Endonucleolytic cleavage at apurinic or apyrimidinic sites to products with a 5'-phosphate.. In terms of biological role, DNA repair enzyme involved in the repair of deaminated bases. Selectively cleaves double-stranded DNA at the second phosphodiester bond 3' to a deoxyinosine leaving behind the intact lesion on the nicked DNA. The polypeptide is Endonuclease V (Xanthomonas oryzae pv. oryzae (strain MAFF 311018)).